The following is a 410-amino-acid chain: MKQELIERFTRYVKIDTQSNEESHTVPTTPGQIEFGKLLVEELKEIGLTEVMMDDNGYVMATLPANTDKDVPVIGFLAHLDTATDFTGKNVKPQIHENFDGNAITLNEELNVVLTPEQFPELPSYKGHTIITTDGTTLLGADDKAGLTEIMVAMNHLIHNPQIKHGKIRVAFTPDEEIGRGPAHFDVEAFGASFAYTMDGGPLGGLEYESFNAAGAKLTFNGTNTHPGTAKNKMRNATKLAMEFNGHLPVEEAPEYTEGYEGFYHLLSLNGDVEQSKAYYIVRDFDRENFEARKNNVKNIVKNMQEKYGEDAVVLEMNDQYYNMLEKIEPVREIVDIAYEAMKSLDIEPNIHPIRGGTDGSQLSYMGLPTPNIFTGGENYHGKFEYVSVDNMEKAVQVIVEIARRFEEQA.

His79 is a Zn(2+) binding site. The active site involves Asp81. Asp142 contacts Zn(2+). The Proton acceptor role is filled by Glu176. Zn(2+) contacts are provided by Glu177, Asp199, and His381.

It belongs to the peptidase M20B family. Zn(2+) serves as cofactor.

The protein resides in the cytoplasm. It carries out the reaction Release of the N-terminal residue from a tripeptide.. Cleaves the N-terminal amino acid of tripeptides. In Bacillus cereus (strain G9842), this protein is Peptidase T.